The primary structure comprises 388 residues: Succinate--CoA ligase [ADP-forming] subunit beta (388 aa).

The 236-residue stretch at 9–244 (KQLFARSGLP…QSQEDPREAQ (236 aa)) folds into the ATP-grasp domain. Residues Lys-46, 53-55 (GRG), Glu-99, Thr-102, and Glu-107 each bind ATP. Positions 199 and 213 each coordinate Mg(2+). Substrate is bound by residues Asn-264 and 321–323 (GIV).

The protein belongs to the succinate/malate CoA ligase beta subunit family. Heterotetramer of two alpha and two beta subunits. It depends on Mg(2+) as a cofactor.

The enzyme catalyses succinate + ATP + CoA = succinyl-CoA + ADP + phosphate. The catalysed reaction is GTP + succinate + CoA = succinyl-CoA + GDP + phosphate. It functions in the pathway carbohydrate metabolism; tricarboxylic acid cycle; succinate from succinyl-CoA (ligase route): step 1/1. Functionally, succinyl-CoA synthetase functions in the citric acid cycle (TCA), coupling the hydrolysis of succinyl-CoA to the synthesis of either ATP or GTP and thus represents the only step of substrate-level phosphorylation in the TCA. The beta subunit provides nucleotide specificity of the enzyme and binds the substrate succinate, while the binding sites for coenzyme A and phosphate are found in the alpha subunit. This is Succinate--CoA ligase [ADP-forming] subunit beta from Cronobacter sakazakii (strain ATCC BAA-894) (Enterobacter sakazakii).